Consider the following 1887-residue polypeptide: Fatty acid synthase subunit alpha (1887 aa).

Lys-37 is covalently cross-linked (Glycyl lysine isopeptide (Lys-Gly) (interchain with G-Cter in ubiquitin)). Ser-50 carries the post-translational modification Phosphoserine. Positions 96 to 120 (ELAAKEEPAKEEAPAPTPAASAPAP) are disordered. A compositionally biased stretch (basic and acidic residues) spans 98–108 (AAKEEPAKEEA). The Carrier domain occupies 145-220 (VKASLLLHVL…ETFQDTFSGA (76 aa)). At Ser-180 the chain carries O-(pantetheine 4'-phosphoryl)serine. The residue at position 523 (Ser-523) is a Phosphoserine. Residues 675–874 (DKYVLITGAG…CGAIIGWTRG (200 aa)) form a beta-ketoacyl reductase region. Residue Ser-958 is modified to Phosphoserine. Residues 1123–1657 (QEVIVEEDLE…QKGGQAIVVH (535 aa)) enclose the Ketosynthase family 3 (KS3) domain. The For beta-ketoacyl synthase activity role is filled by Cys-1305. Residue Ser-1440 is modified to Phosphoserine. Active-site for beta-ketoacyl synthase activity residues include His-1542 and His-1583. 3 residues coordinate Mg(2+): Asp-1772, Val-1773, and Glu-1774. Residues 1772–1774 (DVE), Tyr-1798, Ser-1808, 1817–1827 (EAVFKSLGVKS), 1841–1844 (RVNK), and 1871–1873 (ISH) contribute to the acetyl-CoA site. Mg(2+)-binding residues include Ser-1872 and His-1873.

It belongs to the thiolase-like superfamily. Fungal fatty acid synthetase subunit alpha family. In terms of assembly, [Alpha(6)beta(6)] hexamers of two multifunctional subunits (alpha and beta). 4'-phosphopantetheine is transferred from CoA to a specific serine of the Acyl carrier domain by the C-terminal PPT domain. This modification is essential for activity because fatty acids are bound in thioester linkage to the sulfhydryl of the prosthetic group.

It carries out the reaction acetyl-CoA + n malonyl-CoA + 2n NADPH + 4n H(+) = a long-chain-acyl-CoA + n CoA + n CO2 + 2n NADP(+).. It catalyses the reaction a fatty acyl-[ACP] + malonyl-[ACP] + H(+) = a 3-oxoacyl-[ACP] + holo-[ACP] + CO2. The catalysed reaction is a (3R)-hydroxyacyl-[ACP] + NADP(+) = a 3-oxoacyl-[ACP] + NADPH + H(+). With respect to regulation, inhibited by cerulenin by covalent binding to active site of the ketoacyl synthase (KS) region. Its function is as follows. Fatty acid synthetase catalyzes the formation of long-chain fatty acids from acetyl-CoA, malonyl-CoA and NADPH. The alpha subunit contains domains for: acyl carrier protein, 3-oxoacyl-[acyl-carrier-protein] reductase, and 3-oxoacyl-[acyl-carrier-protein] synthase. This subunit coordinates the binding of the six beta subunits to the enzyme complex. This Saccharomyces cerevisiae (strain ATCC 204508 / S288c) (Baker's yeast) protein is Fatty acid synthase subunit alpha (FAS2).